The primary structure comprises 205 residues: Small ribosomal subunit protein uS4c (205 aa).

Residues 93–156 (MRLDNTVFRL…KSRNLVLNNL (64 aa)) form the S4 RNA-binding domain.

The protein belongs to the universal ribosomal protein uS4 family. As to quaternary structure, part of the 30S ribosomal subunit. Contacts protein S5. The interaction surface between S4 and S5 is involved in control of translational fidelity.

It localises to the plastid. The protein localises to the chloroplast. Its function is as follows. One of the primary rRNA binding proteins, it binds directly to 16S rRNA where it nucleates assembly of the body of the 30S subunit. With S5 and S12 plays an important role in translational accuracy. This chain is Small ribosomal subunit protein uS4c (rps4), found in Mesostigma viride (Green alga).